A 103-amino-acid polypeptide reads, in one-letter code: Large ribosomal subunit protein bL21 (103 aa).

The protein belongs to the bacterial ribosomal protein bL21 family. In terms of assembly, part of the 50S ribosomal subunit. Contacts protein L20.

Functionally, this protein binds to 23S rRNA in the presence of protein L20. The sequence is that of Large ribosomal subunit protein bL21 from Clostridium acetobutylicum (strain ATCC 824 / DSM 792 / JCM 1419 / IAM 19013 / LMG 5710 / NBRC 13948 / NRRL B-527 / VKM B-1787 / 2291 / W).